Here is a 173-residue protein sequence, read N- to C-terminus: uncharacterized protein (173 aa).

The segment at 49-72 is disordered; that stretch reads PTRSGRTSNSGNRGPVMTSTSSIN.

This is an uncharacterized protein from Human adenovirus B serotype 7 (HAdV-7).